We begin with the raw amino-acid sequence, 246 residues long: Probable transcriptional regulatory protein HS_0508 (246 aa).

Belongs to the TACO1 family.

The protein localises to the cytoplasm. This Histophilus somni (strain 129Pt) (Haemophilus somnus) protein is Probable transcriptional regulatory protein HS_0508.